The chain runs to 152 residues: Small ribosomal subunit protein uS8m (152 aa).

The protein belongs to the universal ribosomal protein uS8 family.

The protein resides in the mitochondrion. This chain is Small ribosomal subunit protein uS8m (mrps8), found in Dictyostelium discoideum (Social amoeba).